A 356-amino-acid polypeptide reads, in one-letter code: UDP-N-acetylglucosamine--N-acetylmuramyl-(pentapeptide) pyrophosphoryl-undecaprenol N-acetylglucosamine transferase (356 aa).

Residues 12–14 (TGG), asparagine 124, arginine 163, serine 188, isoleucine 242, 261–266 (ALTVSE), and glutamine 287 each bind UDP-N-acetyl-alpha-D-glucosamine.

It belongs to the glycosyltransferase 28 family. MurG subfamily.

It localises to the cell inner membrane. The enzyme catalyses di-trans,octa-cis-undecaprenyl diphospho-N-acetyl-alpha-D-muramoyl-L-alanyl-D-glutamyl-meso-2,6-diaminopimeloyl-D-alanyl-D-alanine + UDP-N-acetyl-alpha-D-glucosamine = di-trans,octa-cis-undecaprenyl diphospho-[N-acetyl-alpha-D-glucosaminyl-(1-&gt;4)]-N-acetyl-alpha-D-muramoyl-L-alanyl-D-glutamyl-meso-2,6-diaminopimeloyl-D-alanyl-D-alanine + UDP + H(+). The protein operates within cell wall biogenesis; peptidoglycan biosynthesis. Cell wall formation. Catalyzes the transfer of a GlcNAc subunit on undecaprenyl-pyrophosphoryl-MurNAc-pentapeptide (lipid intermediate I) to form undecaprenyl-pyrophosphoryl-MurNAc-(pentapeptide)GlcNAc (lipid intermediate II). This chain is UDP-N-acetylglucosamine--N-acetylmuramyl-(pentapeptide) pyrophosphoryl-undecaprenol N-acetylglucosamine transferase, found in Pseudomonas fluorescens (strain SBW25).